The sequence spans 1222 residues: ATP-dependent helicase/nuclease subunit A (1222 aa).

In terms of domain architecture, UvrD-like helicase ATP-binding spans 27 to 483 (HLQENERCRD…RDYQKKPEQG (457 aa)). An ATP-binding site is contributed by 48 to 55 (AIYTSGQN). The UvrD-like helicase C-terminal domain occupies 512-798 (ESVGDVLYDE…ADVEVATPKQ (287 aa)).

It belongs to the helicase family. AddA subfamily. Heterodimer of AddA and AddB/RexB. Requires Mg(2+) as cofactor.

The catalysed reaction is Couples ATP hydrolysis with the unwinding of duplex DNA by translocating in the 3'-5' direction.. It catalyses the reaction ATP + H2O = ADP + phosphate + H(+). Its function is as follows. The heterodimer acts as both an ATP-dependent DNA helicase and an ATP-dependent, dual-direction single-stranded exonuclease. Recognizes the chi site generating a DNA molecule suitable for the initiation of homologous recombination. The AddA nuclease domain is required for chi fragment generation; this subunit has the helicase and 3' -&gt; 5' nuclease activities. The protein is ATP-dependent helicase/nuclease subunit A of Streptococcus pyogenes serotype M1.